A 1002-amino-acid chain; its full sequence is Glutamate receptor ionotropic, NMDA 3B (1002 aa).

Residues 1–24 (MESVRTLWLSVALALAVGSRVVRG) form the signal peptide. Topologically, residues 25 to 574 (HPQPCRVPTR…PIGAFMWPLH (550 aa)) are extracellular. N-linked (GlcNAc...) asparagine glycosylation is found at N69, N212, N344, N451, and N465. Intrachain disulfides connect C439–C475 and C445–C476. Glycine is bound by residues S531, S533, and R538. Positions 533 and 538 each coordinate D-serine. Residues 575 to 594 (WSMWVGVFAALHLTALFLTL) traverse the membrane as a helical segment. Topologically, residues 595 to 615 (YEWRSPYGLTPRGRNRGTVFS) are cytoplasmic. The segment at residues 616–627 (YSSALNLCYAIL) is an intramembrane region (discontinuously helical). The Cytoplasmic portion of the chain corresponds to 628 to 641 (FGRTVSSKTPKCPT). Residues 642-661 (GRFLMNLWAIFCLLVLSSYT) form a helical membrane-spanning segment. The Extracellular portion of the chain corresponds to 662-832 (ANLAAVMVGD…TLQMGVYHFS (171 aa)). S701 is a glycine binding site. The D-serine site is built by S701, A702, and D745. D745 is a glycine binding site. N786 is a glycosylation site (N-linked (GlcNAc...) asparagine). The helical transmembrane segment at 833-848 (GLFVLLCLGLGSALLT) threads the bilayer. The Cytoplasmic segment spans residues 849–1002 (SLGEHVFYRL…RLLHAAPAES (154 aa)). Positions 882–910 (ALNTGPPEGQQERAEQERSGPKDELPATD) are disordered. Over residues 891 to 906 (QQERAEQERSGPKDEL) the composition is skewed to basic and acidic residues. Residues 944-985 (LCSNGPGLQAELRELELRIEAARERLRSALLRRGELRALLGD) are a coiled coil. An involved in the trafficking and surface expression of NMDARs region spans residues 951–984 (LQAELRELELRIEAARERLRSALLRRGELRALLG).

The protein belongs to the glutamate-gated ion channel (TC 1.A.10.1) family. NR3B/GRIN3B subfamily. In terms of assembly, forms heterotetrameric channels that contain at least two GluN1 subunits and at least a combination of one GluN2 and one GluN3 subunits (in vitro). Forms heterotetrameric channels composed of two GluN1/zeta subunits (GRIN1), and two identical GluN3 subunits (GRIN3A or GRIN3B) (in vitro). Does not form functional homomeric channels. Expressed in the hippocampus, the corpus callosum, in the facial and trigeminal nuclei of the brainstem and the ventral horn of the spinal cord.

Its subcellular location is the cell membrane. It is found in the postsynaptic cell membrane. It catalyses the reaction Ca(2+)(in) = Ca(2+)(out). The enzyme catalyses Na(+)(in) = Na(+)(out). Excitatory glycine receptors are inhibited by D-serine at a concentrion of 100uM. Its function is as follows. Component of a non-conventional N-methyl-D-aspartate (NMDA) receptors (NMDARs) that function as heterotetrameric, ligand-gated cation channels with low calcium permeability and low voltage-dependent block by Mg(2+). Forms glutamatergic receptor complexes with GluN1 and GluN2 subunits which are activated by glycine binding to the GluN1 and GluN3 subunits and L-glutamate binding to GluN2 subunits. Forms excitatory glycinergic receptor complexes with GluN1 alone which are activated by glycine binding to the GluN1 and GluN3 subunits. GluN3B subunit also binds D-serine and, in the absence of glycine, activates glycinergic receptor complexes, but with lower efficacy than glycine. Each GluN3 subunit confers differential attributes to channel properties, including activation, deactivation and desensitization kinetics, pH sensitivity, Ca2(+) permeability, and binding to allosteric modulators. This Rattus norvegicus (Rat) protein is Glutamate receptor ionotropic, NMDA 3B.